We begin with the raw amino-acid sequence, 179 residues long: ATP synthase subunit delta (179 aa).

Belongs to the ATPase delta chain family. In terms of assembly, F-type ATPases have 2 components, F(1) - the catalytic core - and F(0) - the membrane proton channel. F(1) has five subunits: alpha(3), beta(3), gamma(1), delta(1), epsilon(1). F(0) has three main subunits: a(1), b(2) and c(10-14). The alpha and beta chains form an alternating ring which encloses part of the gamma chain. F(1) is attached to F(0) by a central stalk formed by the gamma and epsilon chains, while a peripheral stalk is formed by the delta and b chains.

The protein resides in the cell membrane. Its function is as follows. F(1)F(0) ATP synthase produces ATP from ADP in the presence of a proton or sodium gradient. F-type ATPases consist of two structural domains, F(1) containing the extramembraneous catalytic core and F(0) containing the membrane proton channel, linked together by a central stalk and a peripheral stalk. During catalysis, ATP synthesis in the catalytic domain of F(1) is coupled via a rotary mechanism of the central stalk subunits to proton translocation. Functionally, this protein is part of the stalk that links CF(0) to CF(1). It either transmits conformational changes from CF(0) to CF(1) or is implicated in proton conduction. The sequence is that of ATP synthase subunit delta from Clostridium botulinum (strain Okra / Type B1).